Reading from the N-terminus, the 147-residue chain is Calcium-regulated heat stable protein 1 (147 aa).

Residues methionine 1–proline 12 are compositionally biased toward pro residues. Residues methionine 1–arginine 49 are disordered. N-acetylserine is present on serine 2. Serine 30, serine 32, and serine 41 each carry phosphoserine. Position 45 is a phosphothreonine (threonine 45). 2 positions are modified to phosphoserine: serine 52 and serine 58. Positions valine 62–threonine 129 constitute a CSD domain. A phosphoserine mark is found at serine 146 and serine 147.

As to quaternary structure, homodimer. Interacts with STYX. In terms of processing, can be phosphorylated by DYRK2 (in vitro). Dephosphorylated by calcineurin in a Ca(2+) dependent manner, and probably by PP2A or PP4 serine phosphatases in cAMP- and PKC-mediated pathways. As to expression, widely expressed.

The protein resides in the cytoplasm. The protein localises to the P-body. It is found in the cytoplasmic granule. In terms of biological role, binds mRNA and regulates the stability of target mRNA. This Rattus norvegicus (Rat) protein is Calcium-regulated heat stable protein 1 (Carhsp1).